Consider the following 59-residue polypeptide: Large ribosomal subunit protein uL30 (59 aa).

The protein belongs to the universal ribosomal protein uL30 family. As to quaternary structure, part of the 50S ribosomal subunit.

This is Large ribosomal subunit protein uL30 from Streptococcus agalactiae serotype Ia (strain ATCC 27591 / A909 / CDC SS700).